We begin with the raw amino-acid sequence, 212 residues long: MNSKFIVIEGLEGAGKTTARDTVVAVLRAQGINDIVFTREPGGTPLAEKLRDLIKQGIDGEVLTDKAEVLMLYAARVQLVENVIKPALARGSWVVGDRHDLSSQAYQGGGRGIDSQLMASLRDTVLGEFRPDLTLYLDLPPAVGLARARARGELDRIEQESLAFFERTRARYLELAASDASIKTIDASQPIEQVSASISQALAQWLTNQELV.

10-17 (GLEGAGKT) is an ATP binding site.

The protein belongs to the thymidylate kinase family.

The catalysed reaction is dTMP + ATP = dTDP + ADP. In terms of biological role, phosphorylation of dTMP to form dTDP in both de novo and salvage pathways of dTTP synthesis. The chain is Thymidylate kinase from Yersinia pseudotuberculosis serotype O:1b (strain IP 31758).